The chain runs to 252 residues: Phosphoglycolate phosphatase (252 aa).

The active-site Nucleophile is Asp-13. The Mg(2+) site is built by Asp-13, Asp-15, and Asp-192.

It belongs to the HAD-like hydrolase superfamily. CbbY/CbbZ/Gph/YieH family. In terms of assembly, monomer. The cofactor is Mg(2+). Chloride is required as a cofactor.

It carries out the reaction 2-phosphoglycolate + H2O = glycolate + phosphate. It participates in organic acid metabolism; glycolate biosynthesis; glycolate from 2-phosphoglycolate: step 1/1. Specifically catalyzes the dephosphorylation of 2-phosphoglycolate. Is involved in the dissimilation of the intracellular 2-phosphoglycolate formed during the DNA repair of 3'-phosphoglycolate ends, a major class of DNA lesions induced by oxidative stress. This Shigella dysenteriae serotype 1 (strain Sd197) protein is Phosphoglycolate phosphatase.